The primary structure comprises 379 residues: Dual-specificity RNA methyltransferase RlmN (379 aa).

The active-site Proton acceptor is Glu-95. Residues 101 to 345 (EETRGTLCVS…TTVRKTRGDD (245 aa)) enclose the Radical SAM core domain. A disulfide bond links Cys-108 and Cys-350. Residues Cys-115, Cys-119, and Cys-122 each contribute to the [4Fe-4S] cluster site. S-adenosyl-L-methionine-binding positions include 176–177 (GE), Ser-208, 230–232 (SLH), and Asn-307. Catalysis depends on Cys-350, which acts as the S-methylcysteine intermediate.

The protein belongs to the radical SAM superfamily. RlmN family. [4Fe-4S] cluster serves as cofactor.

The protein resides in the cytoplasm. It catalyses the reaction adenosine(2503) in 23S rRNA + 2 reduced [2Fe-2S]-[ferredoxin] + 2 S-adenosyl-L-methionine = 2-methyladenosine(2503) in 23S rRNA + 5'-deoxyadenosine + L-methionine + 2 oxidized [2Fe-2S]-[ferredoxin] + S-adenosyl-L-homocysteine. The catalysed reaction is adenosine(37) in tRNA + 2 reduced [2Fe-2S]-[ferredoxin] + 2 S-adenosyl-L-methionine = 2-methyladenosine(37) in tRNA + 5'-deoxyadenosine + L-methionine + 2 oxidized [2Fe-2S]-[ferredoxin] + S-adenosyl-L-homocysteine. Its function is as follows. Specifically methylates position 2 of adenine 2503 in 23S rRNA and position 2 of adenine 37 in tRNAs. m2A2503 modification seems to play a crucial role in the proofreading step occurring at the peptidyl transferase center and thus would serve to optimize ribosomal fidelity. The sequence is that of Dual-specificity RNA methyltransferase RlmN from Burkholderia cenocepacia (strain HI2424).